The following is a 302-amino-acid chain: Lipoyl synthase (302 aa).

Cys-44, Cys-49, Cys-55, Cys-70, Cys-74, Cys-77, and Ser-283 together coordinate [4Fe-4S] cluster. The 217-residue stretch at 56-272 (WSKKHATVMI…ARVAKSKGFL (217 aa)) folds into the Radical SAM core domain.

The protein belongs to the radical SAM superfamily. Lipoyl synthase family. It depends on [4Fe-4S] cluster as a cofactor.

The protein localises to the cytoplasm. The enzyme catalyses [[Fe-S] cluster scaffold protein carrying a second [4Fe-4S](2+) cluster] + N(6)-octanoyl-L-lysyl-[protein] + 2 oxidized [2Fe-2S]-[ferredoxin] + 2 S-adenosyl-L-methionine + 4 H(+) = [[Fe-S] cluster scaffold protein] + N(6)-[(R)-dihydrolipoyl]-L-lysyl-[protein] + 4 Fe(3+) + 2 hydrogen sulfide + 2 5'-deoxyadenosine + 2 L-methionine + 2 reduced [2Fe-2S]-[ferredoxin]. Its pathway is protein modification; protein lipoylation via endogenous pathway; protein N(6)-(lipoyl)lysine from octanoyl-[acyl-carrier-protein]: step 2/2. In terms of biological role, catalyzes the radical-mediated insertion of two sulfur atoms into the C-6 and C-8 positions of the octanoyl moiety bound to the lipoyl domains of lipoate-dependent enzymes, thereby converting the octanoylated domains into lipoylated derivatives. This Orientia tsutsugamushi (strain Ikeda) (Rickettsia tsutsugamushi) protein is Lipoyl synthase.